A 216-amino-acid polypeptide reads, in one-letter code: Large ribosomal subunit protein uL3 (216 aa).

The segment at 132 to 155 (QDASHGNSRSHRVPGSIGQNQTPG) is disordered. Glutamine 152 is modified (N5-methylglutamine).

The protein belongs to the universal ribosomal protein uL3 family. As to quaternary structure, part of the 50S ribosomal subunit. Forms a cluster with proteins L14 and L19. Methylated by PrmB.

One of the primary rRNA binding proteins, it binds directly near the 3'-end of the 23S rRNA, where it nucleates assembly of the 50S subunit. This chain is Large ribosomal subunit protein uL3, found in Legionella pneumophila (strain Paris).